The following is a 66-amino-acid chain: Large ribosomal subunit protein bL35 (66 aa).

This sequence belongs to the bacterial ribosomal protein bL35 family. In terms of assembly, part of the 50S ribosomal subunit. Contacts proteins L15 and L33.

Its function is as follows. Binds the 23S rRNA. This Deinococcus radiodurans (strain ATCC 13939 / DSM 20539 / JCM 16871 / CCUG 27074 / LMG 4051 / NBRC 15346 / NCIMB 9279 / VKM B-1422 / R1) protein is Large ribosomal subunit protein bL35 (rpmI).